A 245-amino-acid polypeptide reads, in one-letter code: 1-(5-phosphoribosyl)-5-[(5-phosphoribosylamino)methylideneamino] imidazole-4-carboxamide isomerase (245 aa).

The active-site Proton acceptor is aspartate 7. Aspartate 129 acts as the Proton donor in catalysis.

The protein belongs to the HisA/HisF family.

It is found in the cytoplasm. The catalysed reaction is 1-(5-phospho-beta-D-ribosyl)-5-[(5-phospho-beta-D-ribosylamino)methylideneamino]imidazole-4-carboxamide = 5-[(5-phospho-1-deoxy-D-ribulos-1-ylimino)methylamino]-1-(5-phospho-beta-D-ribosyl)imidazole-4-carboxamide. Its pathway is amino-acid biosynthesis; L-histidine biosynthesis; L-histidine from 5-phospho-alpha-D-ribose 1-diphosphate: step 4/9. The chain is 1-(5-phosphoribosyl)-5-[(5-phosphoribosylamino)methylideneamino] imidazole-4-carboxamide isomerase from Shewanella halifaxensis (strain HAW-EB4).